The chain runs to 621 residues: Frizzled and smoothened-like protein H (621 aa).

A signal peptide spans 1-21 (MNLKFYNLIFFISFLICCIHG). At 22–246 (QRYLPVEGGK…VWNQIFKIND (225 aa)) the chain is on the extracellular side. The 140-residue stretch at 27-166 (VEGGKCEKYI…IEWVKYNLTI (140 aa)) folds into the FZ domain. 2 disulfides stabilise this stretch: Cys32-Cys103 and Cys46-Cys96. Asn60, Asn107, Asn163, Asn176, and Asn206 each carry an N-linked (GlcNAc...) asparagine glycan. The helical transmembrane segment at 247–267 (VLSSISLACTLILLFTFGILN) threads the bilayer. Over 268–277 (PKLNRFDKKN) the chain is Cytoplasmic. A helical transmembrane segment spans residues 278-298 (LFFIAGVFGMSVSGVLIAANG). The Extracellular portion of the chain corresponds to 299 to 318 (SEKTVCPTPERYAVNTDRVC). A helical transmembrane segment spans residues 319 to 339 (VASGFLVHFSALFAILWWTIG). The Cytoplasmic segment spans residues 340 to 359 (LADVYYGIKFVGKKIKIKVR). The helical transmembrane segment at 360–380 (YYLLATLTISLAFTLVPLGTG) threads the bilayer. The Extracellular portion of the chain corresponds to 381–400 (QYQAGLSNVMCFLKDEIYQS). The helical transmembrane segment at 401–421 (MTFFVPLGICLTMGTILMILV) threads the bilayer. Residues 422–464 (MREIYVIVKSNSTSSSFSSSSSKSKSKSKSSDSISYLKLQVKP) lie on the Cytoplasmic side of the membrane. A helical transmembrane segment spans residues 465-485 (MLNIILFYFTFLYLFLFVRVI). The Extracellular segment spans residues 486 to 520 (NSRYQEYEDSAIPYMLCLAKGGGDSCRLKGPSAGS). The helical transmembrane segment at 521–541 (LGYFAYCLRIYGIYLFIISFL) threads the bilayer. Residues 542–621 (SSRTIKIWKE…RNYNTDDDDL (80 aa)) lie on the Cytoplasmic side of the membrane. The segment covering 575–594 (FSSSKNTSTTQNSTLNNTES) has biased composition (low complexity). The disordered stretch occupies residues 575–603 (FSSSKNTSTTQNSTLNNTESDTSKRGNSS).

The protein belongs to the G-protein coupled receptor Fz/Smo family.

It localises to the membrane. This chain is Frizzled and smoothened-like protein H (fslH), found in Dictyostelium discoideum (Social amoeba).